The sequence spans 361 residues: 24-methylenesterol C-methyltransferase 2 (361 aa).

Belongs to the class I-like SAM-binding methyltransferase superfamily. Erg6/SMT family.

It catalyses the reaction 24-methylidenelophenol + S-adenosyl-L-methionine = (Z)-24-ethylidenelophenol + S-adenosyl-L-homocysteine + H(+). It participates in steroid biosynthesis; sterol biosynthesis. Catalyzes the methyl transfer from S-adenosyl-methionine to the methylene group of 24-methylene lophenol to form 24-ethylidene lophenol. In Arabidopsis thaliana (Mouse-ear cress), this protein is 24-methylenesterol C-methyltransferase 2 (SMT2).